We begin with the raw amino-acid sequence, 218 residues long: Ribonuclease HII (218 aa).

An RNase H type-2 domain is found at 22-211; that stretch reads VRIAGVDEAG…VRAALESRFS (190 aa). Residues Asp-28, Glu-29, and Asp-119 each contribute to the a divalent metal cation site.

It belongs to the RNase HII family. Mn(2+) serves as cofactor. Requires Mg(2+) as cofactor.

Its subcellular location is the cytoplasm. It catalyses the reaction Endonucleolytic cleavage to 5'-phosphomonoester.. Its function is as follows. Endonuclease that specifically degrades the RNA of RNA-DNA hybrids. In Maricaulis maris (strain MCS10) (Caulobacter maris), this protein is Ribonuclease HII.